Consider the following 777-residue polypeptide: Subtilisin-like protease SBT1.4 (777 aa).

Residues 1–25 (MAKLSLSSIFFVFPLLLCFFSPSSS) form the signal peptide. The propeptide at 26-110 (SSDGLESYIV…VIPDQAREIH (85 aa)) is activation peptide. Residues 32 to 110 (SYIVHVQRSH…VIPDQAREIH (79 aa)) enclose the Inhibitor I9 domain. The Peptidase S8 domain maps to 115–614 (PAFLGFSQNS…AGHVDPNKAL (500 aa)). D142 (charge relay system) is an active-site residue. N-linked (GlcNAc...) asparagine glycosylation is present at N198. Residues 199 to 223 (GTKKHAAKESRSPRDTEGHGTHTAS) are disordered. A compositionally biased stretch (basic and acidic residues) spans 205-218 (AKESRSPRDTEGHG). H217 functions as the Charge relay system in the catalytic mechanism. N-linked (GlcNAc...) asparagine glycans are attached at residues N232 and N395. One can recognise a PA domain in the interval 376-461 (LSLVYSGDCG…VGAKAGDQIR (86 aa)). The active-site Charge relay system is S546.

It belongs to the peptidase S8 family.

The protein resides in the secreted. This Arabidopsis thaliana (Mouse-ear cress) protein is Subtilisin-like protease SBT1.4.